Here is a 205-residue protein sequence, read N- to C-terminus: Probable GTP-binding protein EngB (205 aa).

In terms of domain architecture, EngB-type G spans 27 to 201 (QGMEVAFAGR…QNKLNAWFSG (175 aa)). GTP contacts are provided by residues 35-42 (GRSNAGKS), 62-66 (GRTQL), 80-83 (DLPG), 147-150 (TKVD), and 180-182 (FSS). Residues S42 and T64 each contribute to the Mg(2+) site.

It belongs to the TRAFAC class TrmE-Era-EngA-EngB-Septin-like GTPase superfamily. EngB GTPase family. It depends on Mg(2+) as a cofactor.

In terms of biological role, necessary for normal cell division and for the maintenance of normal septation. In Hamiltonella defensa subsp. Acyrthosiphon pisum (strain 5AT), this protein is Probable GTP-binding protein EngB.